The primary structure comprises 319 residues: Ferrochelatase (319 aa).

Histidine 193 and glutamate 274 together coordinate Fe cation.

The protein belongs to the ferrochelatase family.

It localises to the cytoplasm. The enzyme catalyses heme b + 2 H(+) = protoporphyrin IX + Fe(2+). Its pathway is porphyrin-containing compound metabolism; protoheme biosynthesis; protoheme from protoporphyrin-IX: step 1/1. In terms of biological role, catalyzes the ferrous insertion into protoporphyrin IX. This chain is Ferrochelatase, found in Actinobacillus pleuropneumoniae serotype 7 (strain AP76).